Consider the following 499-residue polypeptide: Probable cytosol aminopeptidase (499 aa).

Residues Lys-267 and Asp-272 each coordinate Mn(2+). Residue Lys-279 is part of the active site. The Mn(2+) site is built by Asp-290, Asp-349, and Glu-351. Arg-353 is an active-site residue.

Belongs to the peptidase M17 family. Mn(2+) serves as cofactor.

Its subcellular location is the cytoplasm. It catalyses the reaction Release of an N-terminal amino acid, Xaa-|-Yaa-, in which Xaa is preferably Leu, but may be other amino acids including Pro although not Arg or Lys, and Yaa may be Pro. Amino acid amides and methyl esters are also readily hydrolyzed, but rates on arylamides are exceedingly low.. It carries out the reaction Release of an N-terminal amino acid, preferentially leucine, but not glutamic or aspartic acids.. Functionally, presumably involved in the processing and regular turnover of intracellular proteins. Catalyzes the removal of unsubstituted N-terminal amino acids from various peptides. The chain is Probable cytosol aminopeptidase from Buchnera aphidicola subsp. Acyrthosiphon pisum (strain Tuc7).